Reading from the N-terminus, the 384-residue chain is Putative exopolyphosphatase (384 aa).

Positions 40, 42, 116, 138, and 200 each coordinate Mn(2+).

It belongs to the PPase class C family. Requires Mn(2+) as cofactor.

It catalyses the reaction [phosphate](n) + H2O = [phosphate](n-1) + phosphate + H(+). In terms of biological role, degradation of inorganic polyphosphates. In Schizosaccharomyces pombe (strain 972 / ATCC 24843) (Fission yeast), this protein is Putative exopolyphosphatase.